A 358-amino-acid polypeptide reads, in one-letter code: Nicotinate-nucleotide--dimethylbenzimidazole phosphoribosyltransferase (358 aa).

The active-site Proton acceptor is E313.

The protein belongs to the CobT family.

The enzyme catalyses 5,6-dimethylbenzimidazole + nicotinate beta-D-ribonucleotide = alpha-ribazole 5'-phosphate + nicotinate + H(+). Its pathway is nucleoside biosynthesis; alpha-ribazole biosynthesis; alpha-ribazole from 5,6-dimethylbenzimidazole: step 1/2. Catalyzes the synthesis of alpha-ribazole-5'-phosphate from nicotinate mononucleotide (NAMN) and 5,6-dimethylbenzimidazole (DMB). The polypeptide is Nicotinate-nucleotide--dimethylbenzimidazole phosphoribosyltransferase (Corynebacterium glutamicum (strain ATCC 13032 / DSM 20300 / JCM 1318 / BCRC 11384 / CCUG 27702 / LMG 3730 / NBRC 12168 / NCIMB 10025 / NRRL B-2784 / 534)).